A 233-amino-acid chain; its full sequence is MRIEGELVKAKFVKRLNRFVALVEVDGVQEFAHVPNTGRLKELLVDGAAVMVRKYDKTDRKTRFGLILVRKNGIWVSIDSANAPNRIMYEALVQGKFDKFRDYSEIRREVTVLNSRFDFGLFSEGKEYYIEVKGVTLVENRQGFFPDAPTQRGTRHLEELTKIRQNGKEAGVAFIVQREDADVVRPNDRTDKNFANALRIAAEAGVDLMAYVCKVDAEQRRMDIVREIPVIIK.

This sequence belongs to the SfsA family.

The chain is Sugar fermentation stimulation protein homolog from Acetivibrio thermocellus (strain ATCC 27405 / DSM 1237 / JCM 9322 / NBRC 103400 / NCIMB 10682 / NRRL B-4536 / VPI 7372) (Clostridium thermocellum).